The chain runs to 680 residues: Pescadillo homolog (680 aa).

Positions 315-336 (GEDEKPKAITNGEGESETPTDA) are disordered. The region spanning 359-471 (DPSQLFANCT…ELKEPNQYAP (113 aa)) is the BRCT domain. The disordered stretch occupies residues 494–680 (VPLEEQQTEA…ERKMAKGKAT (187 aa)). Composition is skewed to acidic residues over residues 511–530 (DVED…DDEA), 543–556 (GSDD…EEAD), and 565–576 (AEVDDASEDDEQ). Composition is skewed to basic and acidic residues over residues 597 to 610 (KASE…DPKS), 617 to 635 (RKEL…ERAK), and 654 to 664 (NKKDAESEKLR). Residues 609–680 (KSKAKQQKRK…ERKMAKGKAT (72 aa)) adopt a coiled-coil conformation. Residues 665 to 680 (EKRRRIERKMAKGKAT) show a composition bias toward basic residues.

This sequence belongs to the pescadillo family. Component of the NOP7 complex, composed of ERB1, NOP7 and YTM1. The complex is held together by ERB1, which interacts with NOP7 via its N-terminal domain and with YTM1 via a high-affinity interaction between the seven-bladed beta-propeller domains of the 2 proteins. The NOP7 complex associates with the 66S pre-ribosome.

It is found in the nucleus. The protein resides in the nucleolus. The protein localises to the nucleoplasm. In terms of biological role, component of the NOP7 complex, which is required for maturation of the 25S and 5.8S ribosomal RNAs and formation of the 60S ribosome. The chain is Pescadillo homolog from Pyricularia oryzae (strain 70-15 / ATCC MYA-4617 / FGSC 8958) (Rice blast fungus).